The sequence spans 1027 residues: C2 and GRAM domain-containing protein At5g50170 (1027 aa).

In terms of domain architecture, C2 1 spans 1–103 (MRLYVYILQA…ENQTLLPTWF (103 aa)). The segment covering 158–167 (SPKDLISSRD) has biased composition (basic and acidic residues). Disordered stretches follow at residues 158–177 (SPKD…HDGK) and 201–223 (LHDE…DQCS). Residues 168 to 177 (GKRRKHHDGK) show a composition bias toward basic residues. Residues 206–223 (SVGQSVNSNYEDATDQCS) are compositionally biased toward polar residues. A VASt 1 domain is found at 253–426 (TGGVLVDQKY…LLAKTYKTLD (174 aa)). A helical transmembrane segment spans residues 452–472 (FLYFWSSSVICAVLLSVYVVV). Residues 516–639 (TVHFVQARLH…TADELADLSV (124 aa)) enclose the C2 2 domain. The 64-residue stretch at 693–756 (AFQKLFGLPH…LWEDIDDIQV (64 aa)) folds into the GRAM domain. The region spanning 855-1018 (MMSKVYTCDL…VIFDLFQKES (164 aa)) is the VASt 2 domain.

It is found in the membrane. The chain is C2 and GRAM domain-containing protein At5g50170 from Arabidopsis thaliana (Mouse-ear cress).